The primary structure comprises 427 residues: Peptidase B (427 aa).

Residues Lys-195 and Asp-200 each coordinate Mn(2+). Residue Lys-207 is part of the active site. Mn(2+)-binding residues include Asp-218, Asp-277, and Glu-279. Arg-281 is a catalytic residue.

Belongs to the peptidase M17 family. Homohexamer. It depends on Mn(2+) as a cofactor.

It localises to the cytoplasm. The catalysed reaction is Release of an N-terminal amino acid, Xaa, from a peptide or arylamide. Xaa is preferably Glu or Asp but may be other amino acids, including Leu, Met, His, Cys and Gln.. In terms of biological role, probably plays an important role in intracellular peptide degradation. This Escherichia coli O157:H7 protein is Peptidase B.